Consider the following 977-residue polypeptide: RNA-binding protein 15 (977 aa).

Basic and acidic residues-rich tracts occupy residues 1–10 (MRTAGRDPVP), 35–52 (RGDD…ERSP), 59–72 (RGGE…ERSK), and 98–113 (LHLD…REYD). The interval 1 to 167 (MRTAGRDPVP…SSAPGGGDGA (167 aa)) is disordered. Residue serine 109 is modified to Phosphoserine. The segment covering 119 to 130 (SSSRLHSYSSPS) has biased composition (low complexity). The span at 135-150 (SGGGESRSSSRGGGGE) shows a compositional bias: gly residues. Positions 151-160 (SRSSGAASSA) are enriched in low complexity. An RRM 1 domain is found at 170–252 (KTLKISELGS…RPLKIEAVYV (83 aa)). A phosphoserine mark is found at serine 179, serine 208, and serine 210. A Glycyl lysine isopeptide (Lys-Gly) (interchain with G-Cter in SUMO2) cross-link involves residue lysine 246. 3 positions are modified to phosphoserine: serine 253, serine 257, and serine 259. Positions 256 to 298 (RSRSPLDKDTYPPSASVVGASVGGHRHPPGGGGGQRSLSPGGA) are disordered. A Phosphotyrosine modification is found at tyrosine 266. Phosphoserine occurs at positions 292, 294, and 365. 2 RRM domains span residues 374–451 (RTLF…YGKA) and 455–529 (TRLW…FADT). Residues lysine 406, lysine 420, and lysine 445 each participate in a glycyl lysine isopeptide (Lys-Gly) (interchain with G-Cter in SUMO2) cross-link. Lysine 450 is subject to N6-acetyllysine. 2 stretches are compositionally biased toward basic and acidic residues: residues 555–581 (HRAP…RDLY) and 613–661 (SLDR…ESDR). The tract at residues 555–778 (HRAPDPLRGA…KQDGGTAPVA (224 aa)) is disordered. Threonine 568 is modified (phosphothreonine). Arginine 578 is modified (asymmetric dimethylarginine; alternate; by PRMT1). Arginine 578 carries the omega-N-methylarginine; alternate; by PRMT1 modification. Phosphoserine is present on residues serine 622, serine 656, serine 670, serine 674, serine 700, and serine 741. Basic and acidic residues-rich tracts occupy residues 673–728 (RSPE…AERD) and 741–750 (SPLKKEDRSD). Residue lysine 744 forms a Glycyl lysine isopeptide (Lys-Gly) (interchain with G-Cter in SUMO2) linkage. The segment covering 752 to 771 (SAPSTSTASSKLKSPSQKQD) has biased composition (polar residues). A phosphoserine mark is found at serine 765, serine 767, and serine 781. The region spanning 777 to 956 (VASASPKLCL…YLVMIIVRGF (180 aa)) is the SPOC domain. Positions 865 to 884 (GSSDSRSSSSSAASDTATST) are disordered. A compositionally biased stretch (low complexity) spans 866 to 884 (SSDSRSSSSSAASDTATST). Serine 935 is modified (phosphoserine).

This sequence belongs to the RRM Spen family. As to quaternary structure, component of the WMM complex, a N6-methyltransferase complex composed of a catalytic subcomplex, named MAC, and of an associated subcomplex, named MACOM. The MAC subcomplex is composed of METTL3 and METTL14. The MACOM subcomplex is composed of WTAP, ZC3H13, CBLL1/HAKAI, VIRMA, and, in some cases of RBM15 (RBM15 or RBM15B). Also a component of a MACOM-like complex, named WTAP complex, composed of WTAP, ZC3H13, CBLL1, VIRMA, RBM15, BCLAF1 and THRAP3. Interacts with RBPJ. Interacts (via SPOC domain) with SETD1B. Interacts with NXF1, the interaction is required to promote mRNA export. Interacts with SF3B1. In terms of assembly, (Microbial infection) Interacts with Epstein-Barr virus BSFL2/BMLF1. Methylated at Arg-578 by PRMT1, leading to promote ubiquitination by CNOT4 and subsequent degradation by the proteasome. In terms of processing, ubiquitinated by CNOT4 following methylation at Arg-578 by PRMT1.

It localises to the nucleus speckle. The protein localises to the nucleus. It is found in the nucleoplasm. The protein resides in the nucleus envelope. Its subcellular location is the nucleus membrane. Functionally, RNA-binding protein that acts as a key regulator of N6-methyladenosine (m6A) methylation of RNAs, thereby regulating different processes, such as hematopoietic cell homeostasis, alternative splicing of mRNAs and X chromosome inactivation mediated by Xist RNA. Associated component of the WMM complex, a complex that mediates N6-methyladenosine (m6A) methylation of RNAs, a modification that plays a role in the efficiency of mRNA splicing and RNA processing. Plays a key role in m6A methylation, possibly by binding target RNAs and recruiting the WMM complex. Involved in random X inactivation mediated by Xist RNA: acts by binding Xist RNA and recruiting the WMM complex, which mediates m6A methylation, leading to target YTHDC1 reader on Xist RNA and promoting transcription repression activity of Xist. Required for the development of multiple tissues, such as the maintenance of the homeostasis of long-term hematopoietic stem cells and for megakaryocyte (MK) and B-cell differentiation. Regulates megakaryocyte differentiation by regulating alternative splicing of genes important for megakaryocyte differentiation; probably regulates alternative splicing via m6A regulation. Required for placental vascular branching morphogenesis and embryonic development of the heart and spleen. Acts as a regulator of thrombopoietin response in hematopoietic stem cells by regulating alternative splicing of MPL. May also function as an mRNA export factor, stimulating export and expression of RTE-containing mRNAs which are present in many retrotransposons that require to be exported prior to splicing. High affinity binding of pre-mRNA to RBM15 may allow targeting of the mRNP to the export helicase DBP5 in a manner that is independent of splicing-mediated NXF1 deposition, resulting in export prior to splicing. May be implicated in HOX gene regulation. This Homo sapiens (Human) protein is RNA-binding protein 15.